The sequence spans 384 residues: Chaperone protein DnaJ (384 aa).

The J domain occupies 6–71 (DYYEVLGISK…TKRKTYDQFG (66 aa)). The segment at 141 to 223 (GKKMSIKVNR…CHGTGNTRKV (83 aa)) adopts a CR-type zinc-finger fold. Positions 154, 157, 171, 174, 197, 200, 211, and 214 each coordinate Zn(2+). CXXCXGXG motif repeat units follow at residues 154–161 (CEECNGTG), 171–178 (CSTCNGTG), 197–204 (CSACNGTG), and 211–218 (CSKCHGTG).

Belongs to the DnaJ family. As to quaternary structure, homodimer. Zn(2+) is required as a cofactor.

The protein resides in the cytoplasm. In terms of biological role, participates actively in the response to hyperosmotic and heat shock by preventing the aggregation of stress-denatured proteins and by disaggregating proteins, also in an autonomous, DnaK-independent fashion. Unfolded proteins bind initially to DnaJ; upon interaction with the DnaJ-bound protein, DnaK hydrolyzes its bound ATP, resulting in the formation of a stable complex. GrpE releases ADP from DnaK; ATP binding to DnaK triggers the release of the substrate protein, thus completing the reaction cycle. Several rounds of ATP-dependent interactions between DnaJ, DnaK and GrpE are required for fully efficient folding. Also involved, together with DnaK and GrpE, in the DNA replication of plasmids through activation of initiation proteins. The sequence is that of Chaperone protein DnaJ from Clostridioides difficile (strain 630) (Peptoclostridium difficile).